The following is a 1892-amino-acid chain: Plexin A3 (1892 aa).

An N-terminal signal peptide occupies residues 1 to 20 (MRSLWLLVFSFSVLTGTNMA). The 489-residue stretch at 21-509 (FPMILSERPE…SDKQVSRLPV (489 aa)) folds into the Sema domain. Residues 21 to 1240 (FPMILSERPE…IYSDSTLTLP (1220 aa)) lie on the Extracellular side of the membrane. Asn68 is a glycosylation site (N-linked (GlcNAc...) asparagine). Intrachain disulfides connect Cys86/Cys95, Cys121/Cys129, Cys283/Cys404, Cys299/Cys355, Cys373/Cys392, Cys512/Cys529, Cys518/Cys560, Cys521/Cys538, and Cys532/Cys544. Asn569 carries an N-linked (GlcNAc...) asparagine glycan. A disulfide bridge connects residues Cys595 and Cys615. 4 IPT/TIG domains span residues 861 to 955 (PRIT…YSFV), 957 to 1041 (PSFS…YIYT), 1044 to 1143 (PNIS…FTYY), and 1146 to 1232 (PTFE…LHIY). A glycan (N-linked (GlcNAc...) asparagine) is linked at Asn1183. The chain crosses the membrane as a helical span at residues 1241–1261 (AIIGIGAGGGVLLIAIIAVLI). A coiled-coil region spans residues 1262–1315 (AYKRKTRDADRTLKRLQLQMDNLESRVALECKEAFAELQTDIQELTNDMDGVKI). Residues 1262–1892 (AYKRKTRDAD…QAINLMSGSS (631 aa)) are Cytoplasmic-facing.

The protein belongs to the plexin family. As to expression, detected in primary motor neurons in the embryonic nervous system.

Its subcellular location is the cell membrane. In terms of biological role, coreceptor for class 3 semaphorins. Necessary for signaling by class 3 semaphorins and subsequent remodeling of the cytoskeleton. Plays a role in axon guidance in the developing nervous system. Class 3 semaphorins bind to a complex composed of a neuropilin and a plexin. The plexin modulates the affinity of the complex for specific semaphorins, and its cytoplasmic domain is required for the activation of down-stream signaling events in the cytoplasm. The sequence is that of Plexin A3 (plxna3) from Danio rerio (Zebrafish).